The primary structure comprises 234 residues: Multicopy suppressor of SEC21 protein 27 (234 aa).

The Cytoplasmic segment spans residues 1 to 47 (MQTPLESTDVKLDTLNEPSAHLIEKNVALPKDIFRSYLSYWIYEIAR). At Thr3 the chain carries Phosphothreonine. A helical membrane pass occupies residues 48 to 68 (YTPVMILSLVIGVLVLLIIFF). At 69–72 (NDNE) the chain is on the extracellular side. A helical membrane pass occupies residues 73-93 (ACVFNSAYYAYLSLVVLLIIL). Residues 94–234 (GDGNPKLVSR…NIDALLKKTE (141 aa)) lie on the Cytoplasmic side of the membrane. Residues 231-234 (KKTE) are COPI binding.

The protein belongs to the DUP/COS family. In terms of assembly, interacts with MST28. Binds to coatomer proteins of COPI and SEC23/SEC24 of COPII coated vesicles.

It localises to the endoplasmic reticulum. The protein localises to the golgi apparatus. It is found in the cytoplasmic vesicle. Its subcellular location is the COPI-coated vesicle membrane. The protein resides in the COPII-coated vesicle membrane. Functionally, involved in protein trafficking vesicle formation, probably by stabilizing of coatomer at the Golgi membrane and thus allowing the efficient formation of COPI coated vesicles. The polypeptide is Multicopy suppressor of SEC21 protein 27 (MST27) (Saccharomyces cerevisiae (strain ATCC 204508 / S288c) (Baker's yeast)).